Here is a 324-residue protein sequence, read N- to C-terminus: MSTIQPSAAFLYDRVQRLIPPIEWPAFAGDIDAILDLKRQRNAVILAHNYQTPEIFHCVADIVGDSLALARKAMSTEADVIVLAGVHFMAETAKLLNPQKTVLIPDLRAGCSLADSITAEDIRLLRQRYPGVPVVTYVNTSAEVKAESDICCTSGNAKAIVESLGVPRVIMLPDEYLAENIAAQTDVEIIAWKGHCEVHERFTPADIRQLRENHPGVIVLAHPECPPDVVAEADFSGSTAAMSDYVERQKPPRVVLLTECSMSDNVALQHPELEFIRPCNLCPHMKRITLANIRSALEQNRHVVTIEPGIAGRARLAVERMLAV.

The iminosuccinate site is built by H48 and S66. Position 111 (C111) interacts with [4Fe-4S] cluster. Residues 137 to 139 and S154 each bind iminosuccinate; that span reads YVN. C196 serves as a coordination point for [4Fe-4S] cluster. Iminosuccinate contacts are provided by residues 222–224 and T239; that span reads HPE. Position 282 (C282) interacts with [4Fe-4S] cluster.

Belongs to the quinolinate synthase family. Type 2 subfamily. It depends on [4Fe-4S] cluster as a cofactor.

The protein resides in the cytoplasm. It carries out the reaction iminosuccinate + dihydroxyacetone phosphate = quinolinate + phosphate + 2 H2O + H(+). Its pathway is cofactor biosynthesis; NAD(+) biosynthesis; quinolinate from iminoaspartate: step 1/1. Functionally, catalyzes the condensation of iminoaspartate with dihydroxyacetone phosphate to form quinolinate. The sequence is that of Quinolinate synthase 2 from Mesorhizobium japonicum (strain LMG 29417 / CECT 9101 / MAFF 303099) (Mesorhizobium loti (strain MAFF 303099)).